The following is a 141-amino-acid chain: Nucleoside diphosphate kinase (141 aa).

ATP contacts are provided by Lys11, Phe59, Arg87, Thr93, Arg104, and Asn114. Residue His117 is the Pros-phosphohistidine intermediate of the active site.

Belongs to the NDK family. In terms of assembly, homotetramer. Requires Mg(2+) as cofactor.

It localises to the cytoplasm. The catalysed reaction is a 2'-deoxyribonucleoside 5'-diphosphate + ATP = a 2'-deoxyribonucleoside 5'-triphosphate + ADP. It carries out the reaction a ribonucleoside 5'-diphosphate + ATP = a ribonucleoside 5'-triphosphate + ADP. In terms of biological role, major role in the synthesis of nucleoside triphosphates other than ATP. The ATP gamma phosphate is transferred to the NDP beta phosphate via a ping-pong mechanism, using a phosphorylated active-site intermediate. This is Nucleoside diphosphate kinase from Paraburkholderia phymatum (strain DSM 17167 / CIP 108236 / LMG 21445 / STM815) (Burkholderia phymatum).